The sequence spans 246 residues: Ribosomal RNA small subunit methyltransferase J (246 aa).

S-adenosyl-L-methionine contacts are provided by residues 115 to 116 (ER) and D169.

It belongs to the methyltransferase superfamily. RsmJ family.

It localises to the cytoplasm. It carries out the reaction guanosine(1516) in 16S rRNA + S-adenosyl-L-methionine = N(2)-methylguanosine(1516) in 16S rRNA + S-adenosyl-L-homocysteine + H(+). Specifically methylates the guanosine in position 1516 of 16S rRNA. This chain is Ribosomal RNA small subunit methyltransferase J, found in Buchnera aphidicola subsp. Acyrthosiphon pisum (strain Tuc7).